Reading from the N-terminus, the 110-residue chain is Late cornified envelope protein 2C (110 aa).

The span at 1–10 shows a compositional bias: low complexity; sequence MSCQQNQQQC. The interval 1–23 is disordered; sequence MSCQQNQQQCQPPPKCPPKCTPK. A compositionally biased stretch (pro residues) spans 11–23; that stretch reads QPPPKCPPKCTPK.

Belongs to the LCE family. As to quaternary structure, interacts with CYSRT1; the interaction is direct. As to expression, skin-specific. Expression was readily detected in adult trunk skin, adult arm skin, fetal skin, penal skin, vulva, esophagus and tongue. Not expressed in the cervix, rectum, lung, colon, or placenta.

In terms of biological role, precursors of the cornified envelope of the stratum. The protein is Late cornified envelope protein 2C (LCE2C) of Homo sapiens (Human).